The primary structure comprises 335 residues: Ketol-acid reductoisomerase (NADP(+)) 2 (335 aa).

The region spanning 1-180 (MKTYYEKDAN…GCTRAGVIET (180 aa)) is the KARI N-terminal Rossmann domain. NADP(+)-binding positions include 24 to 27 (YGSQ), Arg47, Ser51, and 81 to 84 (DEQQ). His106 is a catalytic residue. Gly132 contributes to the NADP(+) binding site. The KARI C-terminal knotted domain maps to 181–326 (TFQEETETDL…AELREMMSWI (146 aa)). The Mg(2+) site is built by Asp189, Glu193, Glu225, and Glu229. Ser250 is a substrate binding site.

Belongs to the ketol-acid reductoisomerase family. Mg(2+) serves as cofactor.

The enzyme catalyses (2R)-2,3-dihydroxy-3-methylbutanoate + NADP(+) = (2S)-2-acetolactate + NADPH + H(+). It catalyses the reaction (2R,3R)-2,3-dihydroxy-3-methylpentanoate + NADP(+) = (S)-2-ethyl-2-hydroxy-3-oxobutanoate + NADPH + H(+). Its pathway is amino-acid biosynthesis; L-isoleucine biosynthesis; L-isoleucine from 2-oxobutanoate: step 2/4. It participates in amino-acid biosynthesis; L-valine biosynthesis; L-valine from pyruvate: step 2/4. In terms of biological role, involved in the biosynthesis of branched-chain amino acids (BCAA). Catalyzes an alkyl-migration followed by a ketol-acid reduction of (S)-2-acetolactate (S2AL) to yield (R)-2,3-dihydroxy-isovalerate. In the isomerase reaction, S2AL is rearranged via a Mg-dependent methyl migration to produce 3-hydroxy-3-methyl-2-ketobutyrate (HMKB). In the reductase reaction, this 2-ketoacid undergoes a metal-dependent reduction by NADPH to yield (R)-2,3-dihydroxy-isovalerate. The polypeptide is Ketol-acid reductoisomerase (NADP(+)) 2 (Bacillus cereus (strain ATCC 10987 / NRS 248)).